We begin with the raw amino-acid sequence, 262 residues long: Thiazole synthase (262 aa).

Catalysis depends on Lys-105, which acts as the Schiff-base intermediate with DXP. 1-deoxy-D-xylulose 5-phosphate contacts are provided by residues Gly-166, Ala-192–Gly-193, and Asn-214–Thr-215.

It belongs to the ThiG family. Homotetramer. Forms heterodimers with either ThiH or ThiS.

It is found in the cytoplasm. The catalysed reaction is [ThiS sulfur-carrier protein]-C-terminal-Gly-aminoethanethioate + 2-iminoacetate + 1-deoxy-D-xylulose 5-phosphate = [ThiS sulfur-carrier protein]-C-terminal Gly-Gly + 2-[(2R,5Z)-2-carboxy-4-methylthiazol-5(2H)-ylidene]ethyl phosphate + 2 H2O + H(+). It participates in cofactor biosynthesis; thiamine diphosphate biosynthesis. In terms of biological role, catalyzes the rearrangement of 1-deoxy-D-xylulose 5-phosphate (DXP) to produce the thiazole phosphate moiety of thiamine. Sulfur is provided by the thiocarboxylate moiety of the carrier protein ThiS. In vitro, sulfur can be provided by H(2)S. The polypeptide is Thiazole synthase (Phenylobacterium zucineum (strain HLK1)).